The primary structure comprises 154 residues: L-alanine exporter AlaE (154 aa).

4 helical membrane-spanning segments follow: residues 21–41 (FAMV…LSGM), 51–71 (LVAI…RDFF), 90–110 (ILAY…VIGA), and 115–135 (IVAA…VYGY).

It belongs to the AlaE exporter family.

It localises to the cell inner membrane. Exports L-alanine. The protein is L-alanine exporter AlaE of Escherichia fergusonii (strain ATCC 35469 / DSM 13698 / CCUG 18766 / IAM 14443 / JCM 21226 / LMG 7866 / NBRC 102419 / NCTC 12128 / CDC 0568-73).